The sequence spans 628 residues: tRNA uridine 5-carboxymethylaminomethyl modification enzyme MnmG (628 aa).

Residues 14–19 (GAGHAG), Val126, and Ser181 contribute to the FAD site. 273–287 (GPRYCPSIEDKVVRF) contributes to the NAD(+) binding site. An FAD-binding site is contributed by Gln370.

This sequence belongs to the MnmG family. As to quaternary structure, homodimer. Heterotetramer of two MnmE and two MnmG subunits. The cofactor is FAD.

It localises to the cytoplasm. NAD-binding protein involved in the addition of a carboxymethylaminomethyl (cmnm) group at the wobble position (U34) of certain tRNAs, forming tRNA-cmnm(5)s(2)U34. The sequence is that of tRNA uridine 5-carboxymethylaminomethyl modification enzyme MnmG from Exiguobacterium sibiricum (strain DSM 17290 / CCUG 55495 / CIP 109462 / JCM 13490 / 255-15).